Reading from the N-terminus, the 317-residue chain is Putative GTPase PH0274 (317 aa).

Residues 54 to 62 (GPPGAGKST), aspartate 196, and 231 to 233 (VGT) each bind GTP.

This sequence belongs to the SIMIBI class G3E GTPase family. ArgK/MeaB subfamily.

In terms of biological role, may have GTPase activity. May also bind and hydrolyze ATP. May function as chaperone. This is Putative GTPase PH0274 from Pyrococcus horikoshii (strain ATCC 700860 / DSM 12428 / JCM 9974 / NBRC 100139 / OT-3).